Here is a 193-residue protein sequence, read N- to C-terminus: dCTP deaminase, dUMP-forming (193 aa).

DCTP contacts are provided by residues 101–106, D119, 127–129, Q148, Y162, and Q174; these read KSSLGR and TLE. E129 (proton donor/acceptor) is an active-site residue. Residues 161-184 are disordered; that stretch reads PYGSETTGSHYQGQRGPTPSRSYQ.

It belongs to the dCTP deaminase family. In terms of assembly, homotrimer.

The catalysed reaction is dCTP + 2 H2O = dUMP + NH4(+) + diphosphate. Its pathway is pyrimidine metabolism; dUMP biosynthesis; dUMP from dCTP: step 1/1. In terms of biological role, bifunctional enzyme that catalyzes both the deamination of dCTP to dUTP and the hydrolysis of dUTP to dUMP without releasing the toxic dUTP intermediate. This chain is dCTP deaminase, dUMP-forming, found in Bifidobacterium animalis subsp. lactis (strain AD011).